Reading from the N-terminus, the 292-residue chain is Poly-beta-1,6-N-acetyl-D-glucosamine N-deacetylase (292 aa).

Positions 1–28 are cleaved as a signal peptide; sequence MKYRKFIILVLSILIILPVSTLDGHHIA. The NodB homology domain occupies 114–292; that stretch reads RSVWINFDDM…WDGFHEKDET (179 aa).

Belongs to the polysaccharide deacetylase family.

The protein localises to the secreted. It is found in the cell wall. In terms of biological role, catalyzes the N-deacetylation of poly-beta-1,6-N-acetyl-D-glucosamine (PNAG, also referred to as PIA), a biofilm adhesin polysaccharide. N-deacetylation is crucial for attachment of the polysaccharide to the bacterial cell surface; it leads to the introduction of positive charges in the otherwise neutral PIA polymer, allowing electrostatic interactions. This chain is Poly-beta-1,6-N-acetyl-D-glucosamine N-deacetylase (icaB), found in Staphylococcus aureus (strain COL).